The following is a 160-amino-acid chain: Cyanate hydratase (160 aa).

Active-site residues include Arg-100, Glu-103, and Ser-126.

Belongs to the cyanase family.

It catalyses the reaction cyanate + hydrogencarbonate + 3 H(+) = NH4(+) + 2 CO2. In terms of biological role, catalyzes the reaction of cyanate with bicarbonate to produce ammonia and carbon dioxide. The sequence is that of Cyanate hydratase from Penicillium rubens (strain ATCC 28089 / DSM 1075 / NRRL 1951 / Wisconsin 54-1255) (Penicillium chrysogenum).